A 50-amino-acid polypeptide reads, in one-letter code: U2-ctenitoxin-Pk1a (50 aa).

5 cysteine pairs are disulfide-bonded: Cys-1–Cys-15, Cys-8–Cys-21, Cys-12–Cys-47, Cys-14–Cys-31, and Cys-23–Cys-29.

As to expression, expressed by the venom gland.

It is found in the secreted. In terms of biological role, insecticidal neurotoxin that reversibly inhibits the N-methyl-D-aspartate (NMDA)-subtype of ionotropic glutamate receptor (GRIN) and inhibits inactivation of insect sodium channels (Nav). In vivo, is highly toxic to insects. This is U2-ctenitoxin-Pk1a from Phoneutria keyserlingi (Brazilian wandering spider).